The following is a 511-amino-acid chain: Lysine--tRNA ligase (511 aa).

The interval 1–20 (MQKNTSQPTNTNEQSNQPSL) is disordered. Mg(2+)-binding residues include Glu-422 and Glu-429.

It belongs to the class-II aminoacyl-tRNA synthetase family. In terms of assembly, homodimer. Requires Mg(2+) as cofactor.

It is found in the cytoplasm. It carries out the reaction tRNA(Lys) + L-lysine + ATP = L-lysyl-tRNA(Lys) + AMP + diphosphate. This is Lysine--tRNA ligase from Chlorobium chlorochromatii (strain CaD3).